Consider the following 399-residue polypeptide: Elongation factor Tu (399 aa).

A tr-type G domain is found at 10 to 204; the sequence is KPHVNIGTIG…AVDTSIPEPE (195 aa). Residues 19–26 form a G1 region; sequence GHVDHGKT. Position 19 to 26 (19 to 26) interacts with GTP; that stretch reads GHVDHGKT. Thr26 serves as a coordination point for Mg(2+). The segment at 60–64 is G2; sequence GITIN. Residues 81–84 are G3; it reads DCPG. Residues 81 to 85 and 136 to 139 contribute to the GTP site; these read DCPGH and NKCD. The G4 stretch occupies residues 136–139; the sequence is NKCD. Positions 174-176 are G5; sequence SGL.

It belongs to the TRAFAC class translation factor GTPase superfamily. Classic translation factor GTPase family. EF-Tu/EF-1A subfamily. Monomer.

It is found in the cytoplasm. The enzyme catalyses GTP + H2O = GDP + phosphate + H(+). Its function is as follows. GTP hydrolase that promotes the GTP-dependent binding of aminoacyl-tRNA to the A-site of ribosomes during protein biosynthesis. The chain is Elongation factor Tu from Prochlorococcus marinus (strain MIT 9303).